A 206-amino-acid chain; its full sequence is Guanylate kinase (206 aa).

In terms of domain architecture, Guanylate kinase-like spans 6 to 185 (GAILVLSGPS…AAKTLRIIAD (180 aa)). 13–20 (GPSGAGKS) contacts ATP.

It belongs to the guanylate kinase family.

It localises to the cytoplasm. The catalysed reaction is GMP + ATP = GDP + ADP. In terms of biological role, essential for recycling GMP and indirectly, cGMP. The protein is Guanylate kinase of Sulfurimonas denitrificans (strain ATCC 33889 / DSM 1251) (Thiomicrospira denitrificans (strain ATCC 33889 / DSM 1251)).